Reading from the N-terminus, the 298-residue chain is 1D-myo-inositol 2-acetamido-2-deoxy-alpha-D-glucopyranoside deacetylase (298 aa).

3 residues coordinate Zn(2+): histidine 14, aspartate 17, and histidine 148. A disordered region spans residues 277–298; that stretch reads RGPAGPDGREHDLFAGLDGPAT.

It belongs to the MshB deacetylase family. It depends on Zn(2+) as a cofactor.

The catalysed reaction is 1D-myo-inositol 2-acetamido-2-deoxy-alpha-D-glucopyranoside + H2O = 1D-myo-inositol 2-amino-2-deoxy-alpha-D-glucopyranoside + acetate. Its function is as follows. Catalyzes the deacetylation of 1D-myo-inositol 2-acetamido-2-deoxy-alpha-D-glucopyranoside (GlcNAc-Ins) in the mycothiol biosynthesis pathway. The chain is 1D-myo-inositol 2-acetamido-2-deoxy-alpha-D-glucopyranoside deacetylase from Nocardia farcinica (strain IFM 10152).